Reading from the N-terminus, the 348-residue chain is Glucan endo-1,3-beta-glucosidase, basic isoform (348 aa).

The residue at position 1 (glutamine 1) is a Pyrrolidone carboxylic acid. Glutamate 95 functions as the Proton donor in the catalytic mechanism. Residue glutamate 240 is the Nucleophile of the active site. Positions alanine 317 to leucine 348 are cleaved as a propeptide — removed in mature form.

It belongs to the glycosyl hydrolase 17 family.

It is found in the vacuole. The enzyme catalyses Hydrolysis of (1-&gt;3)-beta-D-glucosidic linkages in (1-&gt;3)-beta-D-glucans.. Implicated in the defense of plants against pathogens. This is Glucan endo-1,3-beta-glucosidase, basic isoform from Phaseolus vulgaris (Kidney bean).